Here is a 504-residue protein sequence, read N- to C-terminus: Aspartyl/glutamyl-tRNA(Asn/Gln) amidotransferase subunit B (504 aa).

Belongs to the GatB/GatE family. GatB subfamily. As to quaternary structure, heterotrimer of A, B and C subunits.

It catalyses the reaction L-glutamyl-tRNA(Gln) + L-glutamine + ATP + H2O = L-glutaminyl-tRNA(Gln) + L-glutamate + ADP + phosphate + H(+). The catalysed reaction is L-aspartyl-tRNA(Asn) + L-glutamine + ATP + H2O = L-asparaginyl-tRNA(Asn) + L-glutamate + ADP + phosphate + 2 H(+). Functionally, allows the formation of correctly charged Asn-tRNA(Asn) or Gln-tRNA(Gln) through the transamidation of misacylated Asp-tRNA(Asn) or Glu-tRNA(Gln) in organisms which lack either or both of asparaginyl-tRNA or glutaminyl-tRNA synthetases. The reaction takes place in the presence of glutamine and ATP through an activated phospho-Asp-tRNA(Asn) or phospho-Glu-tRNA(Gln). The protein is Aspartyl/glutamyl-tRNA(Asn/Gln) amidotransferase subunit B of Rhodococcus opacus (strain B4).